Reading from the N-terminus, the 341-residue chain is Phenylalanine--tRNA ligase alpha subunit (341 aa).

Mg(2+) is bound at residue glutamate 256.

Belongs to the class-II aminoacyl-tRNA synthetase family. Phe-tRNA synthetase alpha subunit type 1 subfamily. Tetramer of two alpha and two beta subunits. The cofactor is Mg(2+).

It localises to the cytoplasm. The catalysed reaction is tRNA(Phe) + L-phenylalanine + ATP = L-phenylalanyl-tRNA(Phe) + AMP + diphosphate + H(+). This chain is Phenylalanine--tRNA ligase alpha subunit, found in Chlamydia felis (strain Fe/C-56) (Chlamydophila felis).